A 351-amino-acid chain; its full sequence is MIETDILIIGAGPTGLFTVFEAGLLKLKCHIIDGLPQPGGQLTELYPKKPIFDIPGYPSVLAGDLITNLIEQIKQFQPGFTLNETAETIEKLEDGTFIVTSNKGTKHHANSIAIAGGLGSFEPRKPILKDIEFYENDKGVEYFVKDPEKFRDKKVVISGGGDSALDWSIYLSNIASEVTLVHRRNEFRGALDSVEKVQELKSAGKIKLITPGEVVGFKGSEKIESVDIQVNTTLTTVPCDYFIPLFGLTPKLGAIANWGLEIEKNAIKVNNALDYQTNIEGIYAIGDVNTYPGKLKLILCGFHEATLMVQSVYQRINPGKKYVLKYTTVSGIDGFDGTRKEAEKQVVKSIE.

Residues Thr-14, Asp-33, Gln-41, Tyr-46, Ala-86, Phe-121, Asp-287, and Thr-328 each contribute to the FAD site.

It belongs to the ferredoxin--NADP reductase type 2 family. As to quaternary structure, homodimer. It depends on FAD as a cofactor.

It carries out the reaction 2 reduced [2Fe-2S]-[ferredoxin] + NADP(+) + H(+) = 2 oxidized [2Fe-2S]-[ferredoxin] + NADPH. The sequence is that of Ferredoxin--NADP reductase from Flavobacterium psychrophilum (strain ATCC 49511 / DSM 21280 / CIP 103535 / JIP02/86).